Here is a 923-residue protein sequence, read N- to C-terminus: Hexokinase-3 (923 aa).

The span at 1-18 (MDSIGSSGLRQGEETLSC) shows a compositional bias: polar residues. Residues 1-30 (MDSIGSSGLRQGEETLSCSEEGLPGPSDSS) are disordered. 2 Hexokinase domains span residues 27–471 (SDSS…MVTA) and 477–912 (AAHR…LVTA). Residues 84-220 (HGTEQGDFVV…AYNIDVVAVV (137 aa)) are hexokinase small subdomain 1. 95–102 (ELGATGAS) lines the ATP pocket. 95–104 (ELGATGASLR) serves as a coordination point for D-glucose 6-phosphate. D-glucose is bound by residues S168, 185-186 (TK), and 221-222 (ND). The segment at 221 to 460 (NDTVGTMMGC…CDVSLIPSVD (240 aa)) is hexokinase large subdomain 1. The D-glucose 6-phosphate site is built by D222 and T245. Residues N248, E273, and 304–307 (QRFE) each bind D-glucose. Residue 426-428 (GGR) coordinates D-glucose 6-phosphate. Residues 438 to 439 (SV) and 542 to 547 (DLGGTN) contribute to the ATP site. The tract at residues 531–661 (DGSERGDFLA…AVELNVVAIV (131 aa)) is hexokinase small subdomain 2. 542–546 (DLGGT) contacts D-glucose 6-phosphate. Residues 609–610 (SF), 626–627 (TK), and 662–663 (ND) each bind D-glucose. Residues 662–901 (NDTVGTMMSC…CVVTFLQSED (240 aa)) are hexokinase large subdomain 2. Residues D663 and T686 each contribute to the D-glucose 6-phosphate site. T686 contributes to the ATP binding site. D-glucose contacts are provided by residues 688 to 689 (TN), E714, and E748. Residues 753–754 (GM), 790–794 (TKFLS), and 869–873 (TLYKL) contribute to the ATP site. D-glucose 6-phosphate contacts are provided by residues 867 to 869 (DGT) and S903.

This sequence belongs to the hexokinase family.

It catalyses the reaction a D-hexose + ATP = a D-hexose 6-phosphate + ADP + H(+). It carries out the reaction D-fructose + ATP = D-fructose 6-phosphate + ADP + H(+). The enzyme catalyses D-glucose + ATP = D-glucose 6-phosphate + ADP + H(+). The protein operates within carbohydrate metabolism; hexose metabolism. Its pathway is carbohydrate degradation; glycolysis; D-glyceraldehyde 3-phosphate and glycerone phosphate from D-glucose: step 1/4. With respect to regulation, hexokinase is an allosteric enzyme inhibited by its product D-glucose 6-phosphate. Its function is as follows. Catalyzes the phosphorylation of hexose, such as D-glucose and D-fructose, to hexose 6-phosphate (D-glucose 6-phosphate and D-fructose 6-phosphate, respectively). Mediates the initial step of glycolysis by catalyzing phosphorylation of D-glucose to D-glucose 6-phosphate. This is Hexokinase-3 from Homo sapiens (Human).